The following is a 352-amino-acid chain: C-C chemokine receptor type 5 (352 aa).

Over 1–30 (MDYQVSSPIYDIDYYTSEPCQKINVKQIAA) the chain is Extracellular. Tyrosine 3 bears the Sulfotyrosine mark. 2 O-linked (GalNAc...) serine glycosylation sites follow: serine 6 and serine 7. Residues tyrosine 10, tyrosine 14, and tyrosine 15 each carry the sulfotyrosine modification. Disulfide bonds link cysteine 20/cysteine 269 and cysteine 101/cysteine 178. A helical transmembrane segment spans residues 31–58 (RLLPPLYSLVFIFGFVGNMLVILILINC). Topologically, residues 59–68 (KRLKSMTDIY) are cytoplasmic. The chain crosses the membrane as a helical span at residues 69 to 89 (LLNLAISDLFFLLTVPFWAHY). Over 90–102 (AAAQWDFGNTMCQ) the chain is Extracellular. A helical membrane pass occupies residues 103–124 (LLTGLYFIGFFSGIFFIILLTI). The Cytoplasmic portion of the chain corresponds to 125-141 (DRYLAIVHAVFALKART). A helical transmembrane segment spans residues 142–166 (VTFGVVTSVITWVVAVFASLPGIIF). The Extracellular segment spans residues 167 to 198 (TRSQKEGLHYTCSSHFPYSQYQFWKNFQTLKI). The chain crosses the membrane as a helical span at residues 199–218 (VILGLVLPLLVMVICYSGIL). Residues 219–235 (KTLLRCRNEKKRHRAVR) lie on the Cytoplasmic side of the membrane. A helical transmembrane segment spans residues 236–260 (LIFTIMIVYFLFWAPYNIVLLLNTF). Over 261-277 (QEFFGLNNCSSSNRLDQ) the chain is Extracellular. The helical transmembrane segment at 278–301 (AMQVTETLGMTHCCINPIIYAFVG) threads the bilayer. Over 302–352 (EKFRNYLLVFFQKHIAKRFCKCCSIFQQEAPERASSVYTRSTGEQEISVGL) the chain is Cytoplasmic. S-palmitoyl cysteine attachment occurs at residues cysteine 321, cysteine 323, and cysteine 324. A phosphoserine; by BARK1 mark is found at serine 336, serine 337, serine 342, and serine 349.

This sequence belongs to the G-protein coupled receptor 1 family. Interacts with PRAF2. Efficient ligand binding to CCL3/MIP-1alpha and CCL4/MIP-1beta requires sulfation, O-glycosylation and sialic acid modifications. Glycosylation on Ser-6 is required for efficient binding of CCL4. Interacts with GRK2. Interacts with ARRB1 and ARRB2. Interacts with CNIH4. Interacts with S100A4; this interaction stimulates T-lymphocyte chemotaxis. Post-translationally, sulfated on at least 2 of the N-terminal tyrosines. Sulfation is required for efficient binding of the chemokines, CCL3 and CCL4. In terms of processing, palmitoylation in the C-terminal is important for cell surface expression. Phosphorylation on serine residues in the C-terminal is stimulated by binding CC chemokines especially by APO-RANTES. Post-translationally, O-glycosylated, but not N-glycosylated. Ser-6 appears to be the major site even if Ser-7 may be also O-glycosylated. Also sialylated glycans present which contribute to chemokine binding. Thr-16 and Ser-17 may also be glycosylated and, if so, with small moieties such as a T-antigen.

It localises to the cell membrane. Its function is as follows. Receptor for a number of inflammatory CC-chemokines including CCL3/MIP-1-alpha, CCL4/MIP-1-beta and RANTES and subsequently transduces a signal by increasing the intracellular calcium ion level. May play a role in the control of granulocytic lineage proliferation or differentiation. Participates in T-lymphocyte migration to the infection site by acting as a chemotactic receptor. The chain is C-C chemokine receptor type 5 (CCR5) from Pan paniscus (Pygmy chimpanzee).